Reading from the N-terminus, the 404-residue chain is Cysteine desulfurase IscS (404 aa).

Pyridoxal 5'-phosphate is bound by residues A75–T76, N155, Q183, and S203–H205. Residue K206 is modified to N6-(pyridoxal phosphate)lysine. T243 provides a ligand contact to pyridoxal 5'-phosphate. Catalysis depends on C328, which acts as the Cysteine persulfide intermediate. [2Fe-2S] cluster is bound at residue C328.

This sequence belongs to the class-V pyridoxal-phosphate-dependent aminotransferase family. NifS/IscS subfamily. In terms of assembly, homodimer. Forms a heterotetramer with IscU, interacts with other sulfur acceptors. Pyridoxal 5'-phosphate is required as a cofactor.

The protein resides in the cytoplasm. It catalyses the reaction (sulfur carrier)-H + L-cysteine = (sulfur carrier)-SH + L-alanine. Its pathway is cofactor biosynthesis; iron-sulfur cluster biosynthesis. Functionally, master enzyme that delivers sulfur to a number of partners involved in Fe-S cluster assembly, tRNA modification or cofactor biosynthesis. Catalyzes the removal of elemental sulfur atoms from cysteine to produce alanine. Functions as a sulfur delivery protein for Fe-S cluster synthesis onto IscU, an Fe-S scaffold assembly protein, as well as other S acceptor proteins. The protein is Cysteine desulfurase IscS of Proteus mirabilis (strain HI4320).